Reading from the N-terminus, the 561-residue chain is Potassium-transporting ATPase potassium-binding subunit (561 aa).

The next 11 membrane-spanning stretches (helical) occupy residues 5 to 25, 63 to 83, 103 to 122, 133 to 153, 179 to 199, 255 to 275, 281 to 301, 380 to 400, 418 to 438, 485 to 505, and 531 to 551; these read IELF…GTYM, KYAL…YFIL, LAFN…HYAG, IVIV…AAAI, LLPI…PQTF, IEML…GLMI, ALVL…GAVY, AGLQ…GLMV, LIAL…ALTV, IMTG…MLAV, and AIFI…AVIL.

Belongs to the KdpA family. As to quaternary structure, the system is composed of three essential subunits: KdpA, KdpB and KdpC.

It is found in the cell membrane. In terms of biological role, part of the high-affinity ATP-driven potassium transport (or Kdp) system, which catalyzes the hydrolysis of ATP coupled with the electrogenic transport of potassium into the cytoplasm. This subunit binds the extracellular potassium ions and delivers the ions to the membrane domain of KdpB through an intramembrane tunnel. The sequence is that of Potassium-transporting ATPase potassium-binding subunit from Caldanaerobacter subterraneus subsp. tengcongensis (strain DSM 15242 / JCM 11007 / NBRC 100824 / MB4) (Thermoanaerobacter tengcongensis).